The chain runs to 319 residues: Myoblast determination protein 1 (319 aa).

Residue Met-1 forms a Peptide (Met-Gly) (interchain with G-Cter in ubiquitin) linkage. Lys-104 bears the N6-methyllysine; by EHMT2 mark. In terms of domain architecture, bHLH spans 109-160 (DRRKAATMRERRRLSKVNEAFETLKRCTSSNPNQRLPKVEILRNAIRYIEGL). Disordered regions lie at residues 174-222 (AAAA…GARR) and 267-319 (PALL…YQVL). The segment covering 197-207 (SDASSPRSNCS) has biased composition (polar residues). Low complexity predominate over residues 267–276 (PALLLADAPP).

Efficient DNA binding requires dimerization with another bHLH protein. Seems to form active heterodimers with ITF-2. Interacts with SUV39H1. Interacts with DDX5. Interacts with CHD2. Interacts with TSC22D3. Interacts with SETD3. Interacts with P-TEFB complex; promotes the transcriptional activity of MYOD1 through its CDK9-mediated phosphorylation. Interacts with CSRP3. Interacts with NUPR1. Phosphorylated by CDK9. This phosphorylation promotes its function in muscle differentiation. Post-translationally, acetylated by a complex containing EP300 and PCAF. The acetylation is essential to activate target genes. Conversely, its deacetylation by SIRT1 inhibits its function. In terms of processing, ubiquitinated on the N-terminus; which is required for proteasomal degradation. Methylation at Lys-104 by EHMT2/G9a inhibits myogenic activity.

It localises to the nucleus. Its function is as follows. Acts as a transcriptional activator that promotes transcription of muscle-specific target genes and plays a role in muscle differentiation. Together with MYF5 and MYOG, co-occupies muscle-specific gene promoter core region during myogenesis. Induces fibroblasts to differentiate into myoblasts. Interacts with and is inhibited by the twist protein. This interaction probably involves the basic domains of both proteins. The polypeptide is Myoblast determination protein 1 (MYOD1) (Ovis aries (Sheep)).